The sequence spans 151 residues: uncharacterized protein (151 aa).

A disordered region spans residues 48-151; that stretch reads RPPGWQPPVN…SKFDHTRKKF (104 aa). A compositionally biased stretch (polar residues) spans 55–77; it reads PVNTGPTSPVSINASNAAPSNLK. Composition is skewed to low complexity over residues 85–105 and 123–141; these read PRRL…RLPS and KSPS…SLLR.

This is an uncharacterized protein from Schizosaccharomyces pombe (strain 972 / ATCC 24843) (Fission yeast).